Consider the following 212-residue polypeptide: Ribonuclease HII (212 aa).

The 185-residue stretch at Ser28–Phe212 folds into the RNase H type-2 domain. Asp34, Glu35, and Asp127 together coordinate a divalent metal cation.

This sequence belongs to the RNase HII family. The cofactor is Mn(2+). It depends on Mg(2+) as a cofactor.

Its subcellular location is the cytoplasm. The enzyme catalyses Endonucleolytic cleavage to 5'-phosphomonoester.. In terms of biological role, endonuclease that specifically degrades the RNA of RNA-DNA hybrids. The protein is Ribonuclease HII of Chlamydia abortus (strain DSM 27085 / S26/3) (Chlamydophila abortus).